The following is a 480-amino-acid chain: Zinc metalloproteinase/disintegrin (480 aa).

A signal peptide spans 1–20 (MIQVLLITICLAVFPFQGSS). Residues 21–190 (IVLDSGNLNE…KASQLNVSPD (170 aa)) constitute a propeptide that is removed on maturation. The Peptidase M12B domain occupies 197 to 391 (RFIKLAIYVD…HSPQCILNDP (195 aa)). Residues Asn259 and Asn279 are each glycosylated (N-linked (GlcNAc...) asparagine). Intrachain disulfides connect Cys308–Cys386, Cys348–Cys370, Cys350–Cys353, Cys413–Cys428, Cys415–Cys423, Cys422–Cys445, Cys436–Cys442, Cys441–Cys466, and Cys454–Cys473. Zn(2+) is bound at residue His333. Residue Glu334 is part of the active site. Zn(2+) is bound by residues His337 and His343. One can recognise a Disintegrin domain in the interval 399 to 480 (TPVSGNELLE…AGCPRNPFHA (82 aa)). Positions 458 to 460 (RGD) match the Cell attachment site motif.

Belongs to the venom metalloproteinase (M12B) family. P-II subfamily. P-IIa sub-subfamily. As to quaternary structure, monomer. Requires Zn(2+) as cofactor. As to expression, expressed by the venom gland.

It is found in the secreted. In terms of biological role, impairs hemostasis in the envenomed animal. Inhibits platelet aggregation and bone resorption. This Gloydius halys (Chinese water mocassin) protein is Zinc metalloproteinase/disintegrin.